We begin with the raw amino-acid sequence, 467 residues long: Asparagine--tRNA ligase (467 aa).

The protein belongs to the class-II aminoacyl-tRNA synthetase family. As to quaternary structure, homodimer.

The protein localises to the cytoplasm. It catalyses the reaction tRNA(Asn) + L-asparagine + ATP = L-asparaginyl-tRNA(Asn) + AMP + diphosphate + H(+). The protein is Asparagine--tRNA ligase of Haemophilus influenzae (strain PittEE).